A 90-amino-acid chain; its full sequence is Small ribosomal subunit protein bS20 (90 aa).

The protein belongs to the bacterial ribosomal protein bS20 family.

In terms of biological role, binds directly to 16S ribosomal RNA. This is Small ribosomal subunit protein bS20 from Fusobacterium nucleatum subsp. nucleatum (strain ATCC 25586 / DSM 15643 / BCRC 10681 / CIP 101130 / JCM 8532 / KCTC 2640 / LMG 13131 / VPI 4355).